We begin with the raw amino-acid sequence, 162 residues long: Lipoprotein signal peptidase (162 aa).

2 helical membrane-spanning segments follow: residues 56-76 and 84-104; these read FLPP…VVWY and SPLF…NLID. Residues Asp113 and Asp139 contribute to the active site. The helical transmembrane segment at 132-152 threads the bilayer; sequence WPIFNVADSCITIGACMIVLF.

Belongs to the peptidase A8 family.

The protein resides in the cell inner membrane. The enzyme catalyses Release of signal peptides from bacterial membrane prolipoproteins. Hydrolyzes -Xaa-Yaa-Zaa-|-(S,diacylglyceryl)Cys-, in which Xaa is hydrophobic (preferably Leu), and Yaa (Ala or Ser) and Zaa (Gly or Ala) have small, neutral side chains.. The protein operates within protein modification; lipoprotein biosynthesis (signal peptide cleavage). In terms of biological role, this protein specifically catalyzes the removal of signal peptides from prolipoproteins. The polypeptide is Lipoprotein signal peptidase (Chlorobaculum tepidum (strain ATCC 49652 / DSM 12025 / NBRC 103806 / TLS) (Chlorobium tepidum)).